A 246-amino-acid polypeptide reads, in one-letter code: Exosome complex component Rrp41 (246 aa).

The protein belongs to the RNase PH family. Rrp41 subfamily. In terms of assembly, component of the archaeal exosome complex. Forms a hexameric ring-like arrangement composed of 3 Rrp41-Rrp42 heterodimers. The hexameric ring associates with a trimer of Rrp4 and/or Csl4 subunits.

It is found in the cytoplasm. Catalytic component of the exosome, which is a complex involved in RNA degradation. Has 3'-&gt;5' exoribonuclease activity. Can also synthesize heteromeric RNA-tails. The sequence is that of Exosome complex component Rrp41 from Pyrobaculum aerophilum (strain ATCC 51768 / DSM 7523 / JCM 9630 / CIP 104966 / NBRC 100827 / IM2).